The following is a 442-amino-acid chain: Cytokine receptor-like factor 3 (442 aa).

M1 bears the N-acetylmethionine mark. The stretch at E10–Q57 forms a coiled coil. The Fibronectin type-III domain occupies P181 to P274.

The protein belongs to the cytokine receptor-like factor 3 family. In terms of tissue distribution, expressed in several embryonic and adult tissues, including adult and fetal brain, liver, spleen and pancreas. Expressed in adult, but not fetal kidney. Expressed in skin and squamous cell carcinoma (SCC) and in several other cancer types. Also detected in lesion actinic keratosis (AK).

The protein resides in the cytoplasm. In terms of biological role, may play a role in the negative regulation of cell cycle progression. The polypeptide is Cytokine receptor-like factor 3 (CRLF3) (Homo sapiens (Human)).